The chain runs to 452 residues: Serine incorporator 2 (452 aa).

The next 11 membrane-spanning stretches (helical) occupy residues 5–25, 41–61, 96–116, 131–151, 158–178, 205–225, 236–256, 266–286, 319–339, 387–407, and 426–446; these read LGACSLLSCASCLCGSAPCIL, FFTVFLFLGVLVCVIMLSPGV, AVYRMCFAMAAFFFLFSLLMV, GFWFFKFLIFVGITVGAFYIP, IWFYFGVVGSFIFLLIQLLLL, LFFFTLLFYALSITAVALLFV, GKVFIGLNLTLCVCVSIVAIL, SGLLQASVITLYTMFVTWLAL, WDAPSIVGLVVFILCTVFISL, FFHLCLVLASVHIMMTLTNWY, and ICASWTGLLLYLWTLVAPLLL.

Belongs to the TDE1 family.

Its subcellular location is the cell membrane. The enzyme catalyses a 1,2-diacyl-sn-glycero-3-phospho-L-serine(in) = a 1,2-diacyl-sn-glycero-3-phospho-L-serine(out). The catalysed reaction is a 1,2-diacyl-sn-glycero-3-phosphocholine(in) = a 1,2-diacyl-sn-glycero-3-phosphocholine(out). It catalyses the reaction a 1,2-diacyl-sn-glycero-3-phosphoethanolamine(in) = a 1,2-diacyl-sn-glycero-3-phosphoethanolamine(out). In terms of biological role, non-ATP-dependent, non-specific lipid transporter for phosphatidylserine, phosphatidylcholine, and phosphatidylethanolamine. Functions as a scramblase that flips lipids in both directions across the membrane. In contrast to SERINC3 and SERINC5, has no effect on gammaretrovirus particles infectivity. The sequence is that of Serine incorporator 2 (SERINC2) from Bos taurus (Bovine).